Here is a 221-residue protein sequence, read N- to C-terminus: Urease accessory protein UreF (221 aa).

This sequence belongs to the UreF family. In terms of assembly, ureD, UreF and UreG form a complex that acts as a GTP-hydrolysis-dependent molecular chaperone, activating the urease apoprotein by helping to assemble the nickel containing metallocenter of UreC. The UreE protein probably delivers the nickel.

Its subcellular location is the cytoplasm. Required for maturation of urease via the functional incorporation of the urease nickel metallocenter. The polypeptide is Urease accessory protein UreF (Aliivibrio fischeri (strain ATCC 700601 / ES114) (Vibrio fischeri)).